A 186-amino-acid polypeptide reads, in one-letter code: Ribosome-recycling factor (186 aa).

This sequence belongs to the RRF family.

It localises to the cytoplasm. Responsible for the release of ribosomes from messenger RNA at the termination of protein biosynthesis. May increase the efficiency of translation by recycling ribosomes from one round of translation to another. This Endomicrobium trichonymphae protein is Ribosome-recycling factor.